Here is a 756-residue protein sequence, read N- to C-terminus: Alpha-1,2-mannosyltransferase MNN26 (756 aa).

At 1–10 the chain is on the cytoplasmic side; it reads MSLRRLSPSH. The helical transmembrane segment at 11-31 threads the bilayer; that stretch reads LILGTLVLGVIIFNLYVLTST. The Extracellular portion of the chain corresponds to 32–756; the sequence is HEDIKKVKGP…NGKNKQGAAS (725 aa). Polar residues predominate over residues 723-734; that stretch reads LGEKSQPKQPEI. Residues 723–756 are disordered; it reads LGEKSQPKQPEINNNNNNNNNDDDNGKNKQGAAS.

The protein belongs to the MNN1/MNT family.

The protein localises to the golgi apparatus membrane. The protein operates within protein modification; protein glycosylation. In terms of biological role, alpha-1,2-mannosyltransferase required for cell wall integrity. Responsible for addition of the first alpha-1,2-linked mannose to form the branches on the mannan backbone of oligosaccharides. Addition of alpha-1,2-mannose is required for stabilization of the alpha-1,6-mannose backbone and hence regulates mannan fibril length; and is important for both immune recognition and virulence. The protein is Alpha-1,2-mannosyltransferase MNN26 (MNN26) of Candida albicans (strain SC5314 / ATCC MYA-2876) (Yeast).